A 102-amino-acid chain; its full sequence is Large ribosomal subunit protein bL21 (102 aa).

The protein belongs to the bacterial ribosomal protein bL21 family. As to quaternary structure, part of the 50S ribosomal subunit. Contacts protein L20.

This protein binds to 23S rRNA in the presence of protein L20. The polypeptide is Large ribosomal subunit protein bL21 (Shouchella clausii (strain KSM-K16) (Alkalihalobacillus clausii)).